Consider the following 149-residue polypeptide: 3-dehydroquinate dehydratase (149 aa).

The Proton acceptor role is filled by Y24. Residues N75, H81, and D88 each contribute to the substrate site. The Proton donor role is filled by H101. Residues 102-103 and R112 each bind substrate; that span reads LS.

Belongs to the type-II 3-dehydroquinase family. In terms of assembly, homododecamer.

The enzyme catalyses 3-dehydroquinate = 3-dehydroshikimate + H2O. The protein operates within metabolic intermediate biosynthesis; chorismate biosynthesis; chorismate from D-erythrose 4-phosphate and phosphoenolpyruvate: step 3/7. Catalyzes a trans-dehydration via an enolate intermediate. This chain is 3-dehydroquinate dehydratase, found in Bartonella tribocorum (strain CIP 105476 / IBS 506).